Reading from the N-terminus, the 976-residue chain is R3H domain-containing protein 2 (976 aa).

2 disordered regions span residues 32–71 (ISKTPSKEEIEKECEDTSLRQETQRRTSNHGHARKRAKSN) and 105–147 (ISCP…QEYT). The span at 36–56 (PSKEEIEKECEDTSLRQETQR) shows a compositional bias: basic and acidic residues. A Phosphoserine modification is found at Ser-37. Basic residues predominate over residues 58 to 71 (TSNHGHARKRAKSN). Residues 109–143 (SDKEEEKSTKDVSEKEDKDKNKEKIPRKMLSRDSS) show a composition bias toward basic and acidic residues. Ser-143 carries the phosphoserine modification. The region spanning 169–232 (RMMLLKLEQE…AVIINKTSNT (64 aa)) is the R3H domain. An SUZ domain is found at 233–310 (RIPEQRFSEH…NREGLSRTSS (78 aa)). Over residues 257-269 (LKRDDASMDRDDN) the composition is skewed to basic and acidic residues. Disordered regions lie at residues 257–376 (LKRD…ISRP), 401–457 (CTAQ…EAAD), 480–560 (ASTG…PGLQ), 661–725 (GTSP…PSMV), and 738–780 (RGQK…SLSS). Positions 306–317 (SRTSSSRQSSTD) are enriched in low complexity. 3 positions are modified to phosphoserine: Ser-330, Ser-333, and Ser-349. A compositionally biased stretch (low complexity) spans 401–415 (CTAQQQQQQQQQQLP). 2 stretches are compositionally biased toward polar residues: residues 441–453 (PFGQMSLSRQGST) and 480–504 (ASTGQPLPTSNYSTSSHAPPTQQVL). The segment covering 543–560 (SPQRGQQLPQPSQQPGLQ) has biased composition (low complexity). Positions 682 to 691 (SPSPCSPPQM) are enriched in pro residues. Low complexity predominate over residues 692 to 714 (PQQYSGVSPSGPGVVVMQLNVPN). Positions 748-758 (PDSSPQANTQM) are enriched in polar residues. Residues 759 to 777 (SSSPVTSPTQSPAPSPVTS) are compositionally biased toward low complexity. Phosphoserine occurs at positions 853 and 855. Phosphothreonine occurs at positions 856 and 860.

Its subcellular location is the nucleus. The chain is R3H domain-containing protein 2 (R3HDM2) from Homo sapiens (Human).